A 201-amino-acid polypeptide reads, in one-letter code: CASP-like protein 2B2 (201 aa).

The Cytoplasmic segment spans residues 1-28 (MSYLGVGVSPGNVTGSSTKMKLIDRKVR). The chain crosses the membrane as a helical span at residues 29–49 (VTELILRSLVCAFALVAAILV). Over 50 to 71 (ATDVQVREIFTIQKKAKFTDMK) the chain is Extracellular. The helical transmembrane segment at 72 to 92 (ALVFLVVINGIAAGYSLVQAV) threads the bilayer. Over 93–108 (CCLVGLMKGSVLLSEP) the chain is Cytoplasmic. A helical membrane pass occupies residues 109 to 129 (LAWAIFFGDQAVAYLCVAGVA). The Extracellular segment spans residues 130-166 (AAAQSAAFAKLGQPELQWMKICDMYGKFCNQVGEGIA). Residues 167–187 (SALFACIGMVLISCISAFGVF) traverse the membrane as a helical segment. The Cytoplasmic portion of the chain corresponds to 188–201 (RLYGGSKPRQSSRW).

The protein belongs to the Casparian strip membrane proteins (CASP) family. As to quaternary structure, homodimer and heterodimers.

Its subcellular location is the cell membrane. In Arabidopsis lyrata subsp. lyrata (Lyre-leaved rock-cress), this protein is CASP-like protein 2B2.